The sequence spans 180 residues: ATP synthase subunit b, plastid (180 aa).

A helical membrane pass occupies residues 27-49; it reads LVTTLINIAVVLSLLIVFGKGFL.

This sequence belongs to the ATPase B chain family. In terms of assembly, F-type ATPases have 2 components, F(1) - the catalytic core - and F(0) - the membrane proton channel. F(1) has five subunits: alpha(3), beta(3), gamma(1), delta(1), epsilon(1). F(0) has four main subunits: a(1), b(1), b'(1) and c(10-14). The alpha and beta chains form an alternating ring which encloses part of the gamma chain. F(1) is attached to F(0) by a central stalk formed by the gamma and epsilon chains, while a peripheral stalk is formed by the delta, b and b' chains.

It localises to the plastid membrane. Its function is as follows. F(1)F(0) ATP synthase produces ATP from ADP in the presence of a proton or sodium gradient. F-type ATPases consist of two structural domains, F(1) containing the extramembraneous catalytic core and F(0) containing the membrane proton channel, linked together by a central stalk and a peripheral stalk. During catalysis, ATP synthesis in the catalytic domain of F(1) is coupled via a rotary mechanism of the central stalk subunits to proton translocation. In terms of biological role, component of the F(0) channel, it forms part of the peripheral stalk, linking F(1) to F(0). In Cuscuta gronovii (Common dodder), this protein is ATP synthase subunit b, plastid.